We begin with the raw amino-acid sequence, 600 residues long: NADH-quinone oxidoreductase subunit C/D (600 aa).

Residues 1–190 are NADH dehydrogenase I subunit C; the sequence is MVNNMTDLTA…SPFELTKAKQ (190 aa). Residues 214–600 are NADH dehydrogenase I subunit D; it reads DFMFLNLGPN…IDFVMSDVDR (387 aa).

It in the N-terminal section; belongs to the complex I 30 kDa subunit family. In the C-terminal section; belongs to the complex I 49 kDa subunit family. As to quaternary structure, NDH-1 is composed of 13 different subunits. Subunits NuoB, CD, E, F, and G constitute the peripheral sector of the complex.

It is found in the cell inner membrane. It carries out the reaction a quinone + NADH + 5 H(+)(in) = a quinol + NAD(+) + 4 H(+)(out). Functionally, NDH-1 shuttles electrons from NADH, via FMN and iron-sulfur (Fe-S) centers, to quinones in the respiratory chain. The immediate electron acceptor for the enzyme in this species is believed to be ubiquinone. Couples the redox reaction to proton translocation (for every two electrons transferred, four hydrogen ions are translocated across the cytoplasmic membrane), and thus conserves the redox energy in a proton gradient. In Escherichia coli (strain K12 / DH10B), this protein is NADH-quinone oxidoreductase subunit C/D.